The following is a 393-amino-acid chain: SH3 domain-binding protein 5-like (393 aa).

A disordered region spans residues 1 to 58 (MAELRQVPGGRETPQGELRPEVVEDEVPRSPVAEEPGGGGSSSSEAKLSPREEEELDP). The residue at position 13 (Thr13) is a Phosphothreonine. The segment covering 18 to 28 (LRPEVVEDEVP) has biased composition (basic and acidic residues). A phosphoserine mark is found at Ser30 and Ser49. Coiled-coil stretches lie at residues 59-140 (RIQE…YERA) and 169-272 (WQEM…EQIH). Positions 273 to 332 (ARRRGGLPPHPLGPRRSSPVGAEAGPEDMEDGDSGIEGAEGAGLEEGSSLGPGPAPDTDT) are disordered. The segment covering 297–306 (GPEDMEDGDS) has biased composition (acidic residues). Over residues 317-332 (EEGSSLGPGPAPDTDT) the composition is skewed to low complexity. Phosphoserine is present on residues Ser343, Ser350, Ser358, Ser362, and Ser378. The disordered stretch occupies residues 362 to 393 (SLDGQELGTRSGGRRGSDGGARGGRHQRSVSL). The span at 384 to 393 (GGRHQRSVSL) shows a compositional bias: basic residues.

This sequence belongs to the SH3BP5 family.

Its function is as follows. Functions as a guanine nucleotide exchange factor (GEF) for RAB11A. In Homo sapiens (Human), this protein is SH3 domain-binding protein 5-like (SH3BP5L).